The primary structure comprises 87 residues: MARSLKKGPFVDENLFKKAEVAKDGEVIKTWSRRSTIFPEFIGKTFGVYNGKEFIPVYVTEDMVGHKLGEFAPTRKFGGHGDDKGKK.

The protein belongs to the universal ribosomal protein uS19 family.

Protein S19 forms a complex with S13 that binds strongly to the 16S ribosomal RNA. This chain is Small ribosomal subunit protein uS19, found in Mesoplasma florum (strain ATCC 33453 / NBRC 100688 / NCTC 11704 / L1) (Acholeplasma florum).